The primary structure comprises 353 residues: Phenol 2-monooxygenase, reductase component DmpP (353 aa).

The region spanning 3 to 93 is the 2Fe-2S ferredoxin-type domain; the sequence is YNVTIEPTGE…DLVIEADVDA (91 aa). Positions 37, 42, 45, and 77 each coordinate [2Fe-2S] cluster. One can recognise an FAD-binding FR-type domain in the interval 102 to 201; that stretch reads VEDYRGVVSA…SGPYGQFFVR (100 aa).

The multicomponent enzyme phenol hydroxylase is formed by DmpL (P1 component), DmpM (P2 component), DmpN (P3 component), DmpO (P4 component) and DmpP (P5 component). Requires FAD as cofactor. The cofactor is [2Fe-2S] cluster.

It carries out the reaction phenol + NADH + O2 + H(+) = catechol + NAD(+) + H2O. The protein operates within aromatic compound metabolism; phenol degradation. In terms of biological role, part of a multicomponent enzyme which catalyzes the degradation of phenol and some of its methylated derivatives. DmpP probably transfers electrons from NADH, via FAD and the iron-sulfur center, to the oxygenase component of the complex. Required for growth on phenol and for in vitro phenol hydroxylase activity. The chain is Phenol 2-monooxygenase, reductase component DmpP from Pseudomonas sp. (strain CF600).